A 90-amino-acid polypeptide reads, in one-letter code: Phosphocarrier protein NPr (90 aa).

The HPr domain maps to 2–90; the sequence is TVKQTVEITN…ALFNSGFDED (89 aa). Residue histidine 16 is the Pros-phosphohistidine intermediate of the active site.

This sequence belongs to the HPr family.

The protein localises to the cytoplasm. Functionally, component of the phosphoenolpyruvate-dependent nitrogen-metabolic phosphotransferase system (nitrogen-metabolic PTS), that seems to be involved in regulating nitrogen metabolism. The phosphoryl group from phosphoenolpyruvate (PEP) is transferred to the phosphoryl carrier protein NPr by enzyme I-Ntr. Phospho-NPr then transfers it to EIIA-Ntr. Could function in the transcriptional regulation of sigma-54 dependent operons in conjunction with the NPr (PtsO) and EIIA-Ntr (PtsN) proteins. The protein is Phosphocarrier protein NPr (ptsO) of Escherichia coli O157:H7.